The primary structure comprises 486 residues: Protein nucleotidyltransferase YdiU (486 aa).

Gly90, Gly92, Arg93, Lys113, Asp125, Gly126, Arg176, and Arg183 together coordinate ATP. Asp252 acts as the Proton acceptor in catalysis. Positions 253 and 262 each coordinate Mg(2+). An ATP-binding site is contributed by Asp262.

The protein belongs to the SELO family. It depends on Mg(2+) as a cofactor. Mn(2+) is required as a cofactor.

The enzyme catalyses L-seryl-[protein] + ATP = 3-O-(5'-adenylyl)-L-seryl-[protein] + diphosphate. It catalyses the reaction L-threonyl-[protein] + ATP = 3-O-(5'-adenylyl)-L-threonyl-[protein] + diphosphate. It carries out the reaction L-tyrosyl-[protein] + ATP = O-(5'-adenylyl)-L-tyrosyl-[protein] + diphosphate. The catalysed reaction is L-histidyl-[protein] + UTP = N(tele)-(5'-uridylyl)-L-histidyl-[protein] + diphosphate. The enzyme catalyses L-seryl-[protein] + UTP = O-(5'-uridylyl)-L-seryl-[protein] + diphosphate. It catalyses the reaction L-tyrosyl-[protein] + UTP = O-(5'-uridylyl)-L-tyrosyl-[protein] + diphosphate. Its function is as follows. Nucleotidyltransferase involved in the post-translational modification of proteins. It can catalyze the addition of adenosine monophosphate (AMP) or uridine monophosphate (UMP) to a protein, resulting in modifications known as AMPylation and UMPylation. This is Protein nucleotidyltransferase YdiU from Pseudomonas aeruginosa (strain UCBPP-PA14).